The sequence spans 200 residues: Acyl-homoserine-lactone synthase (200 aa).

This sequence belongs to the autoinducer synthase family.

The catalysed reaction is a fatty acyl-[ACP] + S-adenosyl-L-methionine = an N-acyl-L-homoserine lactone + S-methyl-5'-thioadenosine + holo-[ACP] + H(+). Functionally, required for the synthesis of BHL (N-butanoyl-L-homoserine lactone). This chain is Acyl-homoserine-lactone synthase (swrI), found in Serratia liquefaciens.